A 451-amino-acid polypeptide reads, in one-letter code: tRNA modification GTPase MnmE (451 aa).

The (6S)-5-formyl-5,6,7,8-tetrahydrofolate site is built by Arg-28, Glu-85, and Lys-124. The 154-residue stretch at 220–373 folds into the TrmE-type G domain; sequence GLYTVLVGPP…LKTRLRTLLL (154 aa). Asn-230 is a K(+) binding site. GTP is bound by residues 230–235, 249–255, and 274–277; these read NVGKSS, TDVPGTT, and DTAG. Ser-234 is a binding site for Mg(2+). Residues Thr-249, Val-251, and Thr-254 each contribute to the K(+) site. Thr-255 is a binding site for Mg(2+). A (6S)-5-formyl-5,6,7,8-tetrahydrofolate-binding site is contributed by Lys-451.

The protein belongs to the TRAFAC class TrmE-Era-EngA-EngB-Septin-like GTPase superfamily. TrmE GTPase family. Homodimer. Heterotetramer of two MnmE and two MnmG subunits. Requires K(+) as cofactor.

The protein localises to the cytoplasm. In terms of biological role, exhibits a very high intrinsic GTPase hydrolysis rate. Involved in the addition of a carboxymethylaminomethyl (cmnm) group at the wobble position (U34) of certain tRNAs, forming tRNA-cmnm(5)s(2)U34. This Xylella fastidiosa (strain 9a5c) protein is tRNA modification GTPase MnmE.